The sequence spans 553 residues: MIYINFYELYNIKNIRPLIPSFHVCLLIMFLILYSQEILSFFFMCSKFSMNSLKFCVLFSFKTVYSLLKLIKTLIRKLLYCFHYALDLFADEYKVTANDKHYDYRLKSHRIKDKITTKCKGTTKYFNSRHFEIKNAVENLPSFSSNLTTIGNNLRIFWKNGKIRCIKLTCTPDAEIVNFTSNPNRYRFYETNMQELIRKTICEKSDKAIEKTFLCAQLFKTFCEDGVLQTFQPGFIQLDIASNLQEIKKGTKEYSLKSLEMTTTKESNETLCSNDSKHRIARLKNEDNTQKPISKKRKSKKASHKYLSSRTAPNVDFGNFAKERHRENDVSELYSKTKRTSKIRELYKEIGYDKNEFIHELRENEGPSVLYDSGLDQNGTNYDDAFAAPEAISIEKYVSINEEDPKSPKKETSYQVQEKLSQFFQEEMIHLLEMGEACTSRESQKTRKKNLKENIRKQRTTSTAIRDIAIKFLDDAKCETEDSTNLTNREGEAEKTLNTQPWKNLIENFISELQAEEEENNITEWSDIISVRNDEENQIYELPTCQLETNLLV.

The disordered stretch occupies residues 267–305; the sequence is SNETLCSNDSKHRIARLKNEDNTQKPISKKRKSKKASHK. A compositionally biased stretch (basic and acidic residues) spans 275-289; sequence DSKHRIARLKNEDNT. A compositionally biased stretch (basic residues) spans 293-304; the sequence is ISKKRKSKKASH.

In Schizosaccharomyces pombe (strain 972 / ATCC 24843) (Fission yeast), this protein is Meiotic expression up-regulated protein 18 (meu18).